Consider the following 514-residue polypeptide: Activin receptor type-2A (514 aa).

The first 20 residues, 1-20, serve as a signal peptide directing secretion; the sequence is MGAATKLAFAVFLISCSSAG. Topologically, residues 21–136 are extracellular; sequence SILGRSETKE…TSNPVTTKPP (116 aa). 5 disulfide bridges follow: Cys-31-Cys-61, Cys-51-Cys-79, Cys-86-Cys-105, Cys-92-Cys-104, and Cys-106-Cys-111. 3 N-linked (GlcNAc...) asparagine glycosylation sites follow: Asn-46, Asn-67, and Asn-88. Residues 137-162 traverse the membrane as a helical segment; sequence LFNTLLYSLVPIMVVAVIVLFSFWMY. The Cytoplasmic portion of the chain corresponds to 163–514; it reads RHHKLAYPPV…VDFPPKESSL (352 aa). The Protein kinase domain occupies 193-486; sequence LQLLEVKARG…EERIIQMQKL (294 aa). Residues 199–207 and Lys-220 each bind ATP; that span reads KARGRFGCV. The Proton acceptor role is filled by Asp-323.

It belongs to the protein kinase superfamily. TKL Ser/Thr protein kinase family. TGFB receptor subfamily.

Its subcellular location is the cell membrane. It carries out the reaction L-threonyl-[receptor-protein] + ATP = O-phospho-L-threonyl-[receptor-protein] + ADP + H(+). It catalyses the reaction L-seryl-[receptor-protein] + ATP = O-phospho-L-seryl-[receptor-protein] + ADP + H(+). Functionally, receptor for activin A, activin B and inhibin A. Involved in transmembrane signaling. This chain is Activin receptor type-2A (acvr2a), found in Xenopus laevis (African clawed frog).